The primary structure comprises 266 residues: Orotidine 5'-phosphate decarboxylase (266 aa).

Substrate is bound by residues Asp-37, 59 to 61, 91 to 100, Tyr-217, and Arg-235; these read KTH and DRKFADIGNT. Lys-93 acts as the Proton donor in catalysis.

The protein belongs to the OMP decarboxylase family.

It catalyses the reaction orotidine 5'-phosphate + H(+) = UMP + CO2. It functions in the pathway pyrimidine metabolism; UMP biosynthesis via de novo pathway; UMP from orotate: step 2/2. The sequence is that of Orotidine 5'-phosphate decarboxylase (URA3) from Cyberlindnera jadinii (Torula yeast).